The following is a 685-amino-acid chain: Galactocerebrosidase (685 aa).

The N-terminal stretch at 1–42 (MAEWLLSASRQRRVKAMTAAAGSAGRAAVPFLLCALLAPGGA) is a signal peptide. Thr109 serves as a coordination point for substrate. A glycan (N-linked (GlcNAc...) asparagine) is linked at Asn143. Residues Trp151 and Asn197 each contribute to the substrate site. Glu198 (proton donor/acceptor) is an active-site residue. The active-site Nucleophile is Glu274. Residues Cys287 and Cys394 are joined by a disulfide bond. N-linked (GlcNAc...) asparagine glycosylation is present at Asn379. Substrate is bound at residue Arg396. N-linked (GlcNAc...) asparagine glycosylation is found at Asn403, Asn451, Asn556, Asn559, and Asn602.

Belongs to the glycosyl hydrolase 59 family.

The protein localises to the lysosome. It carries out the reaction a beta-D-galactosyl-(1&lt;-&gt;1')-N-acylsphing-4-enine + H2O = an N-acylsphing-4-enine + D-galactose. The enzyme catalyses beta-D-galactosyl-(1&lt;-&gt;1)-sphing-4-enine + H2O = sphing-4-enine + D-galactose. It catalyses the reaction a D-galactosylceramide + H2O = an N-acyl-sphingoid base + D-galactose. Its function is as follows. Hydrolyzes the galactose ester bonds of glycolipids such as galactosylceramide and galactosylsphingosine. Enzyme with very low activity responsible for the lysosomal catabolism of galactosylceramide, a major lipid in myelin, kidney and epithelial cells of small intestine and colon. The polypeptide is Galactocerebrosidase (Macaca mulatta (Rhesus macaque)).